The primary structure comprises 298 residues: Bifunctional methyltransferase/endonuclease (298 aa).

The interval Met-1–Arg-79 is probable methylated-DNA--protein-cysteine methyltransferase. The active site involves Cys-56. The interval Leu-80–Ile-298 is endonuclease V. Residues Asp-137 and Asp-197 each contribute to the Mg(2+) site.

It in the N-terminal section; belongs to the MGMT family. In the C-terminal section; belongs to the endonuclease V family. Mg(2+) is required as a cofactor.

It localises to the cytoplasm. The enzyme catalyses Endonucleolytic cleavage at apurinic or apyrimidinic sites to products with a 5'-phosphate.. DNA repair enzyme involved in the repair of deaminated bases. Selectively cleaves double-stranded DNA at the second phosphodiester bond 3' to a deoxyinosine leaving behind the intact lesion on the nicked DNA. This Picrophilus torridus (strain ATCC 700027 / DSM 9790 / JCM 10055 / NBRC 100828 / KAW 2/3) protein is Bifunctional methyltransferase/endonuclease.